The sequence spans 385 residues: Glycine/sarcosine/betaine reductase complex component C subunit alpha (385 aa).

The active site involves Cys359.

As to quaternary structure, heterooctamer of four alpha and four beta subunits. Component of the glycine, sarcosine and betaine reductase complexes, together with proteins A and B.

The enzyme catalyses acetyl phosphate + [thioredoxin]-disulfide + NH4(+) + H2O = [thioredoxin]-dithiol + glycine + phosphate + H(+). It catalyses the reaction acetyl phosphate + methylamine + [thioredoxin]-disulfide + H2O = sarcosine + [thioredoxin]-dithiol + phosphate + H(+). It carries out the reaction acetyl phosphate + trimethylamine + [thioredoxin]-disulfide + H2O = glycine betaine + [thioredoxin]-dithiol + phosphate + H(+). Functionally, in the first step of glycine, betaine and sarcosine reductases, the substrate is bound to component PB via a Schiff base intermediate. Then the PB-activated substrate is nucleophilically attacked by the selenol anion of component PA to transform it to a carboxymethylated selenoether and the respective amine. By action of component PC, acetyl phosphate is formed, leaving component PA in its oxidized state. Finally component PA becomes reduced by the thioredoxin system to start a new catalytic cycle of reductive deamination. In Peptoclostridium acidaminophilum (Eubacterium acidaminophilum), this protein is Glycine/sarcosine/betaine reductase complex component C subunit alpha (grdD).